Reading from the N-terminus, the 611-residue chain is Oligoendopeptidase F homolog (611 aa).

His-384 contacts Zn(2+). Residue Glu-385 is part of the active site. Zn(2+) is bound by residues His-388 and His-391.

This sequence belongs to the peptidase M3B family. Requires Zn(2+) as cofactor.

The chain is Oligoendopeptidase F homolog (pepF) from Mycoplasma pneumoniae (strain ATCC 29342 / M129 / Subtype 1) (Mycoplasmoides pneumoniae).